Here is a 59-residue protein sequence, read N- to C-terminus: Protein QUA-QUINE STARCH (59 aa).

Expressed in hypocotyls, leaves, vasculature, hydathodes, trichomes, pedicels, sepals, filaments, mature pollen, stigma papillae, styles, siliques, root and shoot tips, but not in shoot meristem, petals or root epidermis.

It localises to the cytoplasm. In terms of biological role, involved in regulating carbon and nitrogen allocation to starch and protein. The polypeptide is Protein QUA-QUINE STARCH (Arabidopsis thaliana (Mouse-ear cress)).